We begin with the raw amino-acid sequence, 78 residues long: Large ribosomal subunit protein bL28 (78 aa).

Belongs to the bacterial ribosomal protein bL28 family.

The chain is Large ribosomal subunit protein bL28 from Edwardsiella ictaluri (strain 93-146).